The chain runs to 284 residues: MTKEVWNTERLHDHFAQSLRVSEMYYDSKTEHQRLKVFQNGTFGRVLTLDDVVQTTEGDNFIYHEMLTHVPILAHGAAKRVLIIGGGDGGIAREVLKHASVEHVTMVEIDAGVVDFSKEYLPMLSQGAFDDARLNLVINDGAVFMKETEDKFDVIIVDSTDPIGPGEVLFTDTFYGHAARALTEDGIIVTQNGVPFMQGDELTNTMRAFQALFQDATCYLATIPTYVGGPMALGWGSHSTKARSVDLTTLEARFAAAGLSPDYYTPEVHKAAFALPGYVKKLFP.

Positions 4 to 238 (EVWNTERLHD…GPMALGWGSH (235 aa)) constitute a PABS domain. Gln-33 serves as a coordination point for S-methyl-5'-thioadenosine. The spermidine site is built by His-64 and Asp-88. S-methyl-5'-thioadenosine-binding positions include Glu-108 and 140 to 141 (DG). Catalysis depends on Asp-158, which acts as the Proton acceptor. Position 158–161 (158–161 (DSTD)) interacts with spermidine. Pro-165 serves as a coordination point for S-methyl-5'-thioadenosine.

The protein belongs to the spermidine/spermine synthase family. Homodimer or homotetramer.

The protein localises to the cytoplasm. It carries out the reaction S-adenosyl 3-(methylsulfanyl)propylamine + putrescine = S-methyl-5'-thioadenosine + spermidine + H(+). It functions in the pathway amine and polyamine biosynthesis; spermidine biosynthesis; spermidine from putrescine: step 1/1. Catalyzes the irreversible transfer of a propylamine group from the amino donor S-adenosylmethioninamine (decarboxy-AdoMet) to putrescine (1,4-diaminobutane) to yield spermidine. The polypeptide is Polyamine aminopropyltransferase (Ruegeria sp. (strain TM1040) (Silicibacter sp.)).